Here is a 152-residue protein sequence, read N- to C-terminus: MSRLPVLLLLQLLVRPGLQAPMTQTTPLKTSWVNCSNMIDEIITHLKQPPLPLLDFNNLNGEDQDILMENNLRRPNLEAFNRAVKSLQNASAIESILKNLLPCLPLATAAPTRHPIHIKDGDWNEFRRKLTFYLKTLENAQAQQTTLSLAIF.

The first 19 residues, Met-1–Gln-19, serve as a signal peptide directing secretion. 2 N-linked (GlcNAc...) asparagine glycosylation sites follow: Asn-34 and Asn-89. Cysteines 35 and 103 form a disulfide.

It belongs to the IL-3 family. As to quaternary structure, interacts with IL3RA. As to expression, activated T-cells, mast cells, natural killer cells.

The protein resides in the secreted. In terms of biological role, cytokine secreted predominantly by activated T-lymphocytes as well as mast cells and osteoblastic cells that controls the production and differentiation of hematopoietic progenitor cells into lineage-restricted cells. Also stimulates mature basophils, eosinophils, and monocytes to become functionally activated. In addition, plays an important role in neural cell proliferation and survival. Participates as well in bone homeostasis and inhibits osteoclast differentiation by preventing NF-kappa-B nuclear translocation and activation. Mechanistically, exerts its biological effects through a receptor composed of IL3RA subunit and a signal transducing subunit IL3RB. Receptor stimulation results in the rapid activation of JAK2 kinase activity leading to STAT5-mediated transcriptional program. Alternatively, contributes to cell survival under oxidative stress in non-hematopoietic systems by activating pathways mediated by PI3K/AKT and ERK. In Homo sapiens (Human), this protein is Interleukin-3.